The sequence spans 351 residues: Probable protein phosphatase 2C 41 (351 aa).

Residues 62-348 (FTSICSNRGE…DDISVLCLFF (287 aa)) enclose the PPM-type phosphatase domain. Asp98, Gly99, Asp293, and Asp339 together coordinate Mn(2+).

The protein belongs to the PP2C family. Requires Mg(2+) as cofactor. Mn(2+) is required as a cofactor.

It carries out the reaction O-phospho-L-seryl-[protein] + H2O = L-seryl-[protein] + phosphate. It catalyses the reaction O-phospho-L-threonyl-[protein] + H2O = L-threonyl-[protein] + phosphate. This chain is Probable protein phosphatase 2C 41, found in Arabidopsis thaliana (Mouse-ear cress).